We begin with the raw amino-acid sequence, 387 residues long: Chaperone protein DnaJ (387 aa).

Residues 5 to 70 form the J domain; that stretch reads DYYEVLGVAK…QKRAAYDRFG (66 aa). The CR-type zinc-finger motif lies at 140–218; sequence GKTETIRLPT…CGGAGRVTRE (79 aa). 8 residues coordinate Zn(2+): cysteine 153, cysteine 156, cysteine 170, cysteine 173, cysteine 192, cysteine 195, cysteine 206, and cysteine 209. 4 CXXCXGXG motif repeats span residues 153–160, 170–177, 192–199, and 206–213; these read CEVCAGSG, CPTCGGYG, CPNCQGRG, and CAACGGAG.

This sequence belongs to the DnaJ family. Homodimer. Zn(2+) serves as cofactor.

The protein resides in the cytoplasm. Functionally, participates actively in the response to hyperosmotic and heat shock by preventing the aggregation of stress-denatured proteins and by disaggregating proteins, also in an autonomous, DnaK-independent fashion. Unfolded proteins bind initially to DnaJ; upon interaction with the DnaJ-bound protein, DnaK hydrolyzes its bound ATP, resulting in the formation of a stable complex. GrpE releases ADP from DnaK; ATP binding to DnaK triggers the release of the substrate protein, thus completing the reaction cycle. Several rounds of ATP-dependent interactions between DnaJ, DnaK and GrpE are required for fully efficient folding. Also involved, together with DnaK and GrpE, in the DNA replication of plasmids through activation of initiation proteins. The protein is Chaperone protein DnaJ of Methylobacterium sp. (strain 4-46).